Here is a 2615-residue protein sequence, read N- to C-terminus: Probable serine/threonine-protein kinase roco7 (2615 aa).

Low complexity predominate over residues 1-13; that stretch reads MDGYSSLSSSGNS. Disordered stretches follow at residues 1 to 35, 275 to 297, 533 to 623, and 946 to 998; these read MDGY…NYNQ, STPT…NSNN, QNIN…GGLN, and SSSS…ISEQ. Low complexity-rich tracts occupy residues 533-560, 567-614, and 946-996; these read QNIN…SSRS, NSST…NNNN, and SSSS…SNIS. The 191-residue stretch at 1441–1631 folds into the COR domain; that stretch reads SVKEAYARNK…LCIWQNGMVL (191 aa). Residues 1775-2042 form the Protein kinase domain; sequence LKFGPQLGSG…ERLSTMQKTF (268 aa). ATP-binding positions include 1781-1789 and Lys1802; that span reads LGSGSYANV. Residue Asp1899 is the Proton acceptor of the active site. 2 disordered regions span residues 2061 to 2158 and 2176 to 2209; these read QINQ…SHSG and GIGS…YESG. Low complexity-rich tracts occupy residues 2073-2158 and 2182-2209; these read SQAA…SHSG and NQHQ…YESG. WD repeat units lie at residues 2491-2527 and 2533-2574; these read GIIK…LVWD and RMVQ…TTYS.

The protein belongs to the protein kinase superfamily. TKL Ser/Thr protein kinase family. ROCO subfamily.

The enzyme catalyses L-seryl-[protein] + ATP = O-phospho-L-seryl-[protein] + ADP + H(+). The catalysed reaction is L-threonyl-[protein] + ATP = O-phospho-L-threonyl-[protein] + ADP + H(+). The protein is Probable serine/threonine-protein kinase roco7 (roco7) of Dictyostelium discoideum (Social amoeba).